The chain runs to 129 residues: Lysozyme C (129 aa).

The 129-residue stretch at 1–129 (KVFGRCELAA…VHAWIRGCRL (129 aa)) folds into the C-type lysozyme domain. Cystine bridges form between Cys6/Cys127, Cys30/Cys115, Cys64/Cys80, and Cys76/Cys94. Catalysis depends on residues Glu35 and Asp52.

Belongs to the glycosyl hydrolase 22 family. As to quaternary structure, monomer.

It is found in the secreted. It catalyses the reaction Hydrolysis of (1-&gt;4)-beta-linkages between N-acetylmuramic acid and N-acetyl-D-glucosamine residues in a peptidoglycan and between N-acetyl-D-glucosamine residues in chitodextrins.. Lysozymes have primarily a bacteriolytic function; those in tissues and body fluids are associated with the monocyte-macrophage system and enhance the activity of immunoagents. This is Lysozyme C (LYZ) from Callipepla californica (California quail).